The sequence spans 152 residues: Protein-export protein SecB (152 aa).

Belongs to the SecB family. In terms of assembly, homotetramer, a dimer of dimers. One homotetramer interacts with 1 SecA dimer.

The protein resides in the cytoplasm. One of the proteins required for the normal export of preproteins out of the cell cytoplasm. It is a molecular chaperone that binds to a subset of precursor proteins, maintaining them in a translocation-competent state. It also specifically binds to its receptor SecA. The polypeptide is Protein-export protein SecB (Rickettsia felis (strain ATCC VR-1525 / URRWXCal2) (Rickettsia azadi)).